The sequence spans 86 residues: MGRKDAATIKLPVDQYRKQIGKQDYKKTKPILRATKLKAEAKKTAIGIKEVGLVLAAILALLLAFYAFFYLRLTTDVDPDLDQDED.

A helical transmembrane segment spans residues 51-71; that stretch reads VGLVLAAILALLLAFYAFFYL.

Belongs to the TRIQK family.

Its subcellular location is the endoplasmic reticulum membrane. May play a role in cell growth and maintenance of cell morphology. In Homo sapiens (Human), this protein is Triple QxxK/R motif-containing protein (TRIQK).